The following is a 156-amino-acid chain: Small ribosomal subunit protein uS7 (156 aa).

This sequence belongs to the universal ribosomal protein uS7 family. In terms of assembly, part of the 30S ribosomal subunit. Contacts proteins S9 and S11.

One of the primary rRNA binding proteins, it binds directly to 16S rRNA where it nucleates assembly of the head domain of the 30S subunit. Is located at the subunit interface close to the decoding center, probably blocks exit of the E-site tRNA. The sequence is that of Small ribosomal subunit protein uS7 from Halalkalibacterium halodurans (strain ATCC BAA-125 / DSM 18197 / FERM 7344 / JCM 9153 / C-125) (Bacillus halodurans).